The primary structure comprises 240 residues: Adenosine 5'-phosphosulfate reductase (240 aa).

Cysteine 125, cysteine 126, cysteine 208, and cysteine 211 together coordinate [4Fe-4S] cluster. Catalysis depends on cysteine 234, which acts as the Nucleophile; cysteine thiosulfonate intermediate.

It belongs to the PAPS reductase family. CysH subfamily. [4Fe-4S] cluster is required as a cofactor.

Its subcellular location is the cytoplasm. The catalysed reaction is [thioredoxin]-disulfide + sulfite + AMP + 2 H(+) = adenosine 5'-phosphosulfate + [thioredoxin]-dithiol. Its pathway is sulfur metabolism; hydrogen sulfide biosynthesis; sulfite from sulfate. Catalyzes the formation of sulfite from adenosine 5'-phosphosulfate (APS) using thioredoxin as an electron donor. This is Adenosine 5'-phosphosulfate reductase from Oceanobacillus iheyensis (strain DSM 14371 / CIP 107618 / JCM 11309 / KCTC 3954 / HTE831).